Consider the following 501-residue polypeptide: AKT kinase-transforming protein (501 aa).

The region spanning 26 to 129 (AIVKEGWLHK…WATAIQTVAD (104 aa)) is the PH domain. The segment at 135-158 (EEETMDFRSGSPSDNSGAEEMEVS) is disordered. The Protein kinase domain maps to 171–429 (FEYLKLLGKG…AKEIMQHRFF (259 aa)). Residues 177-185 (LGKGTFGKV) and lysine 200 contribute to the ATP site. Aspartate 295 serves as the catalytic Proton acceptor. Tyrosine 347 is subject to Phosphotyrosine. Positions 430-501 (ANIVWQDVYE…QFSYSASGTA (72 aa)) constitute an AGC-kinase C-terminal domain. Positions 471–501 (TPPDQDDSMECVDSERRPHFPQFSYSASGTA) are disordered.

This sequence belongs to the protein kinase superfamily. AGC Ser/Thr protein kinase family. RAC subfamily. As to quaternary structure, interacts with mouse THEM4. Post-translationally, autophosphorylated on threonine and serine residues.

The enzyme catalyses L-seryl-[protein] + ATP = O-phospho-L-seryl-[protein] + ADP + H(+). It carries out the reaction L-threonyl-[protein] + ATP = O-phospho-L-threonyl-[protein] + ADP + H(+). This Mus musculus (Mouse) protein is AKT kinase-transforming protein (V-AKT).